The following is a 478-amino-acid chain: NADH-ubiquinone oxidoreductase 49 kDa subunit, mitochondrial (478 aa).

Residues 1-42 (MATTLFRLAGRNAKRHCMRQSTTIAHNLNSTRAFSASALRRY) constitute a mitochondrion transit peptide. Residues Cys341, Cys347, and Cys362 each contribute to the [4Fe-4S] cluster site.

It belongs to the complex I 49 kDa subunit family. As to quaternary structure, complex I is composed of about 40 different subunits. The cofactor is [4Fe-4S] cluster.

It is found in the mitochondrion inner membrane. It carries out the reaction a ubiquinone + NADH + 5 H(+)(in) = a ubiquinol + NAD(+) + 4 H(+)(out). Functionally, core subunit of the mitochondrial membrane respiratory chain NADH dehydrogenase (Complex I) that is believed to belong to the minimal assembly required for catalysis. Complex I functions in the transfer of electrons from NADH to the respiratory chain. The immediate electron acceptor for the enzyme is believed to be ubiquinone. The polypeptide is NADH-ubiquinone oxidoreductase 49 kDa subunit, mitochondrial (nuo-49) (Neurospora crassa (strain ATCC 24698 / 74-OR23-1A / CBS 708.71 / DSM 1257 / FGSC 987)).